Here is an 84-residue protein sequence, read N- to C-terminus: Polyketide-8 synthase acyl carrier protein 1 (84 aa).

Residues 7-82 enclose the Carrier domain; that stretch reads AARKQEIKEI…GVYVVVSEAA (76 aa). S42 is subject to O-(pantetheine 4'-phosphoryl)serine.

In terms of processing, 4'-phosphopantetheine is transferred from CoA to a specific serine of the apo-ACP-like protein.

In terms of biological role, acyl carrier protein. In Streptomyces avermitilis (strain ATCC 31267 / DSM 46492 / JCM 5070 / NBRC 14893 / NCIMB 12804 / NRRL 8165 / MA-4680), this protein is Polyketide-8 synthase acyl carrier protein 1.